The chain runs to 268 residues: Phosphate import ATP-binding protein PstB 2 (268 aa).

One can recognise an ABC transporter domain in the interval 19-263 (YKVRNMAFFY…PKDKRTEDYI (245 aa)). Residue 51 to 58 (GPSGCGKS) coordinates ATP.

This sequence belongs to the ABC transporter superfamily. Phosphate importer (TC 3.A.1.7) family. The complex is composed of two ATP-binding proteins (PstB), two transmembrane proteins (PstC and PstA) and a solute-binding protein (PstS).

The protein localises to the cell inner membrane. The enzyme catalyses phosphate(out) + ATP + H2O = ADP + 2 phosphate(in) + H(+). Its function is as follows. Part of the ABC transporter complex PstSACB involved in phosphate import. Responsible for energy coupling to the transport system. The protein is Phosphate import ATP-binding protein PstB 2 of Gloeobacter violaceus (strain ATCC 29082 / PCC 7421).